Reading from the N-terminus, the 528-residue chain is Nucleolar GTP-binding protein 1 (528 aa).

An OBG-type G domain is found at 168-335; it reads RTLLVCGFPN…VKAMACDLLL (168 aa). GTP-binding positions include 174-181, 220-224, and 287-290; these read GFPNVGKS, DTPGI, and SKSD. A disordered region spans residues 470-528; that stretch reads PDSWKHRSRNSGGDIAVHVRRDSKTQVAQPPRLPSKKKARFDDKHYYDRKPKHLYRGRK. Over residues 509–518 the composition is skewed to basic and acidic residues; the sequence is RFDDKHYYDR. Positions 519–528 are enriched in basic residues; sequence KPKHLYRGRK.

Belongs to the TRAFAC class OBG-HflX-like GTPase superfamily. OBG GTPase family. NOG subfamily.

The protein localises to the nucleus. Its subcellular location is the nucleolus. Involved in the biogenesis of the 60S ribosomal subunit. The polypeptide is Nucleolar GTP-binding protein 1 (NOG1) (Encephalitozoon cuniculi (strain GB-M1) (Microsporidian parasite)).